Here is a 205-residue protein sequence, read N- to C-terminus: Outer-membrane lipoprotein carrier protein (205 aa).

Positions 1 to 21 (MRFLAVATMVVALMVPWSVRA) are cleaved as a signal peptide.

Belongs to the LolA family. As to quaternary structure, monomer.

It is found in the periplasm. Functionally, participates in the translocation of lipoproteins from the inner membrane to the outer membrane. Only forms a complex with a lipoprotein if the residue after the N-terminal Cys is not an aspartate (The Asp acts as a targeting signal to indicate that the lipoprotein should stay in the inner membrane). The protein is Outer-membrane lipoprotein carrier protein of Methylobacillus flagellatus (strain ATCC 51484 / DSM 6875 / VKM B-1610 / KT).